Reading from the N-terminus, the 188-residue chain is Diphosphoinositol polyphosphate phosphohydrolase DDP1 (188 aa).

Residues 1–21 (MGKTADNHGPVRSETAREGRE) are compositionally biased toward basic and acidic residues. Residues 1-23 (MGKTADNHGPVRSETAREGRENQ) are disordered. In terms of domain architecture, Nudix hydrolase spans 30 to 179 (GARLVAGCIC…KRPELLEALN (150 aa)). Residues R32, S52, S53, and K63 each contribute to the 1D-myo-inositol hexakisphosphate site. 5-diphospho-1D-myo-inositol 1,2,3,4,6-pentakisphosphate contacts are provided by R32, S52, S53, and K63. Residues R32, S52, S53, and K63 each contribute to the P(1),P(5)-bis(5'-adenosyl) pentaphosphate site. Mg(2+) contacts are provided by K63, E80, and E84. The Nudix box motif lies at 65-86 (GVEKDEPNYETTAQRETWEEAG). D100 contacts P(1),P(5)-bis(5'-adenosyl) pentaphosphate. 1D-myo-inositol hexakisphosphate-binding residues include R102, R129, R152, and R171. Position 102 (R102) interacts with 5-diphospho-1D-myo-inositol 1,2,3,4,6-pentakisphosphate. Residues R152 and R171 each contribute to the 5-diphospho-1D-myo-inositol 1,2,3,4,6-pentakisphosphate site. P(1),P(5)-bis(5'-adenosyl) pentaphosphate is bound by residues R152, R171, and E173.

This sequence belongs to the Nudix hydrolase family. DIPP subfamily. It depends on Mg(2+) as a cofactor. Mn(2+) serves as cofactor. Zn(2+) is required as a cofactor.

It localises to the cytoplasm. The protein localises to the nucleus. It catalyses the reaction diphospho-myo-inositol polyphosphate + H2O = myo-inositol polyphosphate + phosphate.. The catalysed reaction is P(1),P(6)-bis(5'-adenosyl) hexaphosphate + H2O = adenosine 5'-pentaphosphate + AMP + 2 H(+). It carries out the reaction P(1),P(5)-bis(5'-adenosyl) pentaphosphate + H2O = adenosine 5'-tetraphosphate + AMP + 2 H(+). The enzyme catalyses [phosphate](n+1) + n H2O = (n+1) phosphate + n H(+). May eliminate potentially toxic dinucleoside polyphosphates during sporulation. Most active against diadenosine 5',5'''-P1,P6-hexaphosphate (Ap6A). Can also hydrolyze diadenosine 5',5'''-P1,P5-pentaphosphate (Ap5A), adenosine 5'-pentaphosphate (p5A), and adenosine 5'-tetraphosphate (p4A) are also substrates, but not diadenosine 5',5'''-P1,P4-tetraphosphate (Ap4A) or other dinucleotides, mononucleotides, nucleotide sugars, or nucleotide alcohols. Also cleaves a beta-phosphate from the diphosphate groups in PP-InsP5 (diphosphoinositol pentakisphosphate) and [PP]2-InsP4 (bisdiphosphoinositol tetrakisphosphate). Also has endopolyphosphatase activity. The sequence is that of Diphosphoinositol polyphosphate phosphohydrolase DDP1 (DDP1) from Saccharomyces cerevisiae (strain ATCC 204508 / S288c) (Baker's yeast).